Reading from the N-terminus, the 359-residue chain is NADH-quinone oxidoreductase subunit H (359 aa).

8 helical membrane-spanning segments follow: residues 19 to 39, 94 to 114, 127 to 147, 175 to 195, 202 to 222, 255 to 275, 301 to 321, and 337 to 357; these read IGWF…FIAL, FLFV…FAVL, VGLF…LAAG, IALL…IILM, FLHW…IYFI, FAVI…IISI, VWGA…QMWL, and CWKV…IWVI.

It belongs to the complex I subunit 1 family. In terms of assembly, NDH-1 is composed of 14 different subunits. Subunits NuoA, H, J, K, L, M, N constitute the membrane sector of the complex.

The protein resides in the cell inner membrane. The catalysed reaction is a quinone + NADH + 5 H(+)(in) = a quinol + NAD(+) + 4 H(+)(out). NDH-1 shuttles electrons from NADH, via FMN and iron-sulfur (Fe-S) centers, to quinones in the respiratory chain. The immediate electron acceptor for the enzyme in this species is believed to be ubiquinone. Couples the redox reaction to proton translocation (for every two electrons transferred, four hydrogen ions are translocated across the cytoplasmic membrane), and thus conserves the redox energy in a proton gradient. This subunit may bind ubiquinone. This chain is NADH-quinone oxidoreductase subunit H, found in Chlorobaculum tepidum (strain ATCC 49652 / DSM 12025 / NBRC 103806 / TLS) (Chlorobium tepidum).